The following is a 552-amino-acid chain: Putative E3 ubiquitin-protein ligase ARI6 (552 aa).

The segment at 129–343 (REFTCGICFE…GGYYACNRYE (215 aa)) is TRIAD supradomain. Cys133, Cys136, Cys150, His152, Cys155, Cys158, Cys178, Cys183, Cys222, Cys227, Cys245, Cys247, Cys252, Cys255, His260, Cys265, Cys292, and Cys295 together coordinate Zn(2+). An RING-type 1 zinc finger spans residues 133 to 183 (CGICFESYPLEETISVSCGHPFCATCWTGYISTSINDGPGCLMLKCPYPCC). Residues 202 to 265 (ERYYRYFLRS…SEEAHRPVDC (64 aa)) form an IBR-type zinc finger. An RING-type 2; atypical zinc finger spans residues 292–322 (CPKCKRPIEKNHGCMHMTCTPPCKFEFCWLC). Cys305 is an active-site residue. 6 residues coordinate Zn(2+): Cys310, Cys314, Cys319, Cys322, His329, and Cys339. The segment at 518 to 552 (HAASSKPANCKPSSNTKDGGKGKKEALTMAGSAET) is disordered. Positions 519-534 (AASSKPANCKPSSNTK) are enriched in polar residues.

The protein belongs to the RBR family. Ariadne subfamily. Requires Zn(2+) as cofactor.

The enzyme catalyses [E2 ubiquitin-conjugating enzyme]-S-ubiquitinyl-L-cysteine + [acceptor protein]-L-lysine = [E2 ubiquitin-conjugating enzyme]-L-cysteine + [acceptor protein]-N(6)-ubiquitinyl-L-lysine.. It participates in protein modification; protein ubiquitination. Its function is as follows. Might act as an E3 ubiquitin-protein ligase, or as part of E3 complex, which accepts ubiquitin from specific E2 ubiquitin-conjugating enzymes and then transfers it to substrates. In Arabidopsis thaliana (Mouse-ear cress), this protein is Putative E3 ubiquitin-protein ligase ARI6 (ARI6).